The following is a 286-amino-acid chain: MTAKLIDGLALSKTLRADVAARAAALTARGHQPGLAVVLVGDNPASEVYVRNKVKACHDNGLGSSFDRYPADLPEAELLARIDELNRDPRIHGILVQLPLPPHIDSHKVIEAIAPEKDVDGFHVANAGALMTGQPLFRPCTPYGVMKMLAAYEIPLQGANAVVIGRSNIVGKPMALLLLEAGATVTICHSKTRDLAAHTRNADVVVAATGLRNILTADMVKPGAAVIDVGMNRDEAGKLCGDVDFAGVKEVAGYITPVPGGVGPMTITMLLVNTIEAAEREAAANA.

NADP(+) contacts are provided by residues 165–167 (GRS) and Ser190.

This sequence belongs to the tetrahydrofolate dehydrogenase/cyclohydrolase family. In terms of assembly, homodimer.

The catalysed reaction is (6R)-5,10-methylene-5,6,7,8-tetrahydrofolate + NADP(+) = (6R)-5,10-methenyltetrahydrofolate + NADPH. It carries out the reaction (6R)-5,10-methenyltetrahydrofolate + H2O = (6R)-10-formyltetrahydrofolate + H(+). Its pathway is one-carbon metabolism; tetrahydrofolate interconversion. Catalyzes the oxidation of 5,10-methylenetetrahydrofolate to 5,10-methenyltetrahydrofolate and then the hydrolysis of 5,10-methenyltetrahydrofolate to 10-formyltetrahydrofolate. The protein is Bifunctional protein FolD of Paraburkholderia xenovorans (strain LB400).